The following is a 146-amino-acid chain: Large ribosomal subunit protein bL9 (146 aa).

Belongs to the bacterial ribosomal protein bL9 family.

Its function is as follows. Binds to the 23S rRNA. The protein is Large ribosomal subunit protein bL9 of Deinococcus deserti (strain DSM 17065 / CIP 109153 / LMG 22923 / VCD115).